We begin with the raw amino-acid sequence, 206 residues long: ATP-dependent Clp protease proteolytic subunit 1 (206 aa).

Catalysis depends on Ser-100, which acts as the Nucleophile. His-125 is an active-site residue.

Belongs to the peptidase S14 family. Fourteen ClpP subunits assemble into 2 heptameric rings which stack back to back to give a disk-like structure with a central cavity, resembling the structure of eukaryotic proteasomes.

The protein localises to the cytoplasm. The enzyme catalyses Hydrolysis of proteins to small peptides in the presence of ATP and magnesium. alpha-casein is the usual test substrate. In the absence of ATP, only oligopeptides shorter than five residues are hydrolyzed (such as succinyl-Leu-Tyr-|-NHMec, and Leu-Tyr-Leu-|-Tyr-Trp, in which cleavage of the -Tyr-|-Leu- and -Tyr-|-Trp bonds also occurs).. Cleaves peptides in various proteins in a process that requires ATP hydrolysis. Has a chymotrypsin-like activity. Plays a major role in the degradation of misfolded proteins. In Myxococcus xanthus (strain DK1622), this protein is ATP-dependent Clp protease proteolytic subunit 1.